Consider the following 135-residue polypeptide: Endocuticle structural glycoprotein SgAbd-2 (135 aa).

Q1 is subject to Pyrrolidone carboxylic acid. T11 and T100 each carry an O-linked (HexNAc...) threonine glycan. The Chitin-binding type R&amp;R domain occupies 32–102; it reads DGSYAYSYQT…AEGAHLPTPP (71 aa).

Component of the abdominal endocuticle. This Schistocerca gregaria (Desert locust) protein is Endocuticle structural glycoprotein SgAbd-2.